The following is an 83-amino-acid chain: Large ribosomal subunit protein bL27 (83 aa).

The tract at residues 1-22 (MAHKKGQGSTRNGRDSHSKRLG) is disordered.

The protein belongs to the bacterial ribosomal protein bL27 family.

This chain is Large ribosomal subunit protein bL27, found in Protochlamydia amoebophila (strain UWE25).